A 176-amino-acid polypeptide reads, in one-letter code: Ribosome maturation factor RimM (176 aa).

A PRC barrel domain is found at 100 to 173 (KDEYHYHDLI…WLLINPPPGL (74 aa)).

It belongs to the RimM family. Binds ribosomal protein uS19.

The protein resides in the cytoplasm. Functionally, an accessory protein needed during the final step in the assembly of 30S ribosomal subunit, possibly for assembly of the head region. Essential for efficient processing of 16S rRNA. May be needed both before and after RbfA during the maturation of 16S rRNA. It has affinity for free ribosomal 30S subunits but not for 70S ribosomes. The protein is Ribosome maturation factor RimM of Prochlorococcus marinus (strain NATL1A).